A 320-amino-acid chain; its full sequence is Ubiquitin-like domain-containing CTD phosphatase 1 (320 aa).

The region spanning 6 to 77 is the Ubiquitin-like domain; that stretch reads VVVIVKWSGK…LKPNFKLMMV (72 aa). Residues 136 to 296 enclose the FCP1 homology domain; that stretch reads PREGKKLLVL…LKLSDYLRKI (161 aa). D146, D148, and D255 together coordinate Mg(2+).

It depends on Mg(2+) as a cofactor.

The protein resides in the nucleus. The enzyme catalyses O-phospho-L-seryl-[protein] + H2O = L-seryl-[protein] + phosphate. The catalysed reaction is O-phospho-L-threonyl-[protein] + H2O = L-threonyl-[protein] + phosphate. In terms of biological role, dephosphorylates 26S nuclear proteasomes, thereby decreasing their proteolytic activity. Recruited to the 19S regulatory particle of the 26S proteasome where it dephosphorylates 19S component Rpt1 which impairs Rpt1 ATPase activity and disrupts 26S proteasome assembly. The sequence is that of Ubiquitin-like domain-containing CTD phosphatase 1 from Drosophila melanogaster (Fruit fly).